The chain runs to 125 residues: Acidic phospholipase A2 6 (125 aa).

Residue serine 1 is a signal peptide. Residues 2–7 (NRPMPL) constitute a propeptide that is removed on maturation. Intrachain disulfides connect cysteine 18–cysteine 77, cysteine 33–cysteine 124, cysteine 35–cysteine 50, cysteine 49–cysteine 105, cysteine 56–cysteine 98, cysteine 66–cysteine 91, and cysteine 84–cysteine 96. Aspartate 30 provides a ligand contact to Zn(2+). Positions 34 and 36 each coordinate Ca(2+). Histidine 53 is a catalytic residue. Aspartate 54 contributes to the Ca(2+) binding site. Aspartate 99 is a catalytic residue.

As to quaternary structure, heterodimer formed between isoform 5 and isoform 6 in presence of zinc ion and monomer in absence of zinc ion. It depends on Ca(2+) as a cofactor. Expressed by the venom gland.

The protein resides in the secreted. The catalysed reaction is a 1,2-diacyl-sn-glycero-3-phosphocholine + H2O = a 1-acyl-sn-glycero-3-phosphocholine + a fatty acid + H(+). PLA2 catalyzes the calcium-dependent hydrolysis of the 2-acyl groups in 3-sn-phosphoglycerides. The polypeptide is Acidic phospholipase A2 6 (Naja sagittifera (Andaman cobra)).